The sequence spans 692 residues: ABC1 family protein C21C3.03, mitochondrial (692 aa).

Residues 1–91 (MISFSHWNSH…RKFTTRQKSE (91 aa)) constitute a mitochondrion transit peptide. 2 helical membrane-spanning segments follow: residues 96 to 116 (WRILRITFLVLPFTVGGLWIL) and 161 to 181 (LFIIFSPIIITLPFIALISFL).

It belongs to the protein kinase superfamily. ADCK protein kinase family.

It localises to the mitochondrion membrane. The protein is ABC1 family protein C21C3.03, mitochondrial of Schizosaccharomyces pombe (strain 972 / ATCC 24843) (Fission yeast).